A 337-amino-acid chain; its full sequence is 4-hydroxyproline 2-epimerase (337 aa).

Residue Cys91 is the Proton acceptor of the active site. Residues 92–93, Asp252, and 257–258 contribute to the substrate site; these read GH and GT.

Belongs to the proline racemase family.

The catalysed reaction is trans-4-hydroxy-L-proline = cis-4-hydroxy-D-proline. Its function is as follows. Catalyzes the epimerization of trans-4-hydroxy-L-proline (t4LHyp) to cis-4-hydroxy-D-proline (c4DHyp). Is likely involved in a degradation pathway that converts t4LHyp to alpha-ketoglutarate. Displays no proline racemase activity. This chain is 4-hydroxyproline 2-epimerase, found in Cereibacter sphaeroides (strain ATCC 17029 / ATH 2.4.9) (Rhodobacter sphaeroides).